The sequence spans 81 residues: Small ribosomal subunit protein eS21 (81 aa).

This sequence belongs to the eukaryotic ribosomal protein eS21 family.

This Zea mays (Maize) protein is Small ribosomal subunit protein eS21 (RPS21).